The primary structure comprises 309 residues: Protein FdhE homolog (309 aa).

The protein belongs to the FdhE family.

It localises to the cytoplasm. Necessary for formate dehydrogenase activity. This Enterobacter sp. (strain 638) protein is Protein FdhE homolog.